We begin with the raw amino-acid sequence, 445 residues long: Na(+)-translocating NADH-quinone reductase subunit A (445 aa).

It belongs to the NqrA family. In terms of assembly, composed of six subunits; NqrA, NqrB, NqrC, NqrD, NqrE and NqrF.

The enzyme catalyses a ubiquinone + n Na(+)(in) + NADH + H(+) = a ubiquinol + n Na(+)(out) + NAD(+). In terms of biological role, NQR complex catalyzes the reduction of ubiquinone-1 to ubiquinol by two successive reactions, coupled with the transport of Na(+) ions from the cytoplasm to the periplasm. NqrA to NqrE are probably involved in the second step, the conversion of ubisemiquinone to ubiquinol. In Teredinibacter turnerae (strain ATCC 39867 / T7901), this protein is Na(+)-translocating NADH-quinone reductase subunit A.